Here is a 396-residue protein sequence, read N- to C-terminus: GDSL esterase/lipase ACHE (396 aa).

The N-terminal stretch at 1-31 (MATAATATAGSRAAVLLLLSLALALALRPSD) is a signal peptide. Serine 49 serves as the catalytic Nucleophile. Residues asparagine 108, asparagine 126, asparagine 151, asparagine 196, and asparagine 339 are each glycosylated (N-linked (GlcNAc...) asparagine). Residues aspartate 359 and histidine 362 contribute to the active site.

The protein belongs to the 'GDSL' lipolytic enzyme family.

The protein resides in the secreted. In terms of biological role, esterase that can hydrolyze acetylthiocholine and propionylthiocholine in vitro. Substrate preference is propionylthiocholine &gt; acetylthiocholine. Possesses extremely low activity against butyrylthiocholine. The polypeptide is GDSL esterase/lipase ACHE (Zea mays (Maize)).